A 528-amino-acid chain; its full sequence is Na(+)/H(+) antiporter NhaB (528 aa).

Helical transmembrane passes span 20–39 (WFKIAIISFLVINPIVFYFN), 66–86 (PGGLLAIEAVAIGMTSPSQVL), 97–117 (LLLVFMVAGIYFMKQLLLFVF), 139–159 (AFLSAFLDALTVIAVIITVAV), 241–261 (IRMSPVTVPVFFAGITTCFLV), 304–324 (AVIGVWLIAGLALHLASVGLI), 349–369 (EEALPFTALLAVFFAIVAVII), 390–410 (LVIFYIANGLLSMVSDNVFVG), 448–468 (ATPNGQAAFLFLLTSAIAPLI), and 476–496 (VWMALPYTIVLSIVGVLAIQL).

Belongs to the NhaB Na(+)/H(+) (TC 2.A.34) antiporter family.

It is found in the cell inner membrane. It catalyses the reaction 2 Na(+)(in) + 3 H(+)(out) = 2 Na(+)(out) + 3 H(+)(in). Na(+)/H(+) antiporter that extrudes sodium in exchange for external protons. The chain is Na(+)/H(+) antiporter NhaB from Shewanella pealeana (strain ATCC 700345 / ANG-SQ1).